Here is a 94-residue protein sequence, read N- to C-terminus: Pyrimidine/purine nucleoside phosphorylase (94 aa).

It belongs to the nucleoside phosphorylase PpnP family.

The enzyme catalyses a purine D-ribonucleoside + phosphate = a purine nucleobase + alpha-D-ribose 1-phosphate. It carries out the reaction adenosine + phosphate = alpha-D-ribose 1-phosphate + adenine. The catalysed reaction is cytidine + phosphate = cytosine + alpha-D-ribose 1-phosphate. It catalyses the reaction guanosine + phosphate = alpha-D-ribose 1-phosphate + guanine. The enzyme catalyses inosine + phosphate = alpha-D-ribose 1-phosphate + hypoxanthine. It carries out the reaction thymidine + phosphate = 2-deoxy-alpha-D-ribose 1-phosphate + thymine. The catalysed reaction is uridine + phosphate = alpha-D-ribose 1-phosphate + uracil. It catalyses the reaction xanthosine + phosphate = alpha-D-ribose 1-phosphate + xanthine. Its function is as follows. Catalyzes the phosphorolysis of diverse nucleosides, yielding D-ribose 1-phosphate and the respective free bases. Can use uridine, adenosine, guanosine, cytidine, thymidine, inosine and xanthosine as substrates. Also catalyzes the reverse reactions. This Pseudomonas fluorescens (strain ATCC BAA-477 / NRRL B-23932 / Pf-5) protein is Pyrimidine/purine nucleoside phosphorylase.